The following is a 492-amino-acid chain: G protein-activated inward rectifier potassium channel 1 (492 aa).

Topologically, residues 1–72 are cytoplasmic; sequence MSALRRKLGD…LFTTLVDLKW (72 aa). A disordered region spans residues 16–35; it reads STSASGGGLPPPRAAPRGKR. A helical transmembrane segment spans residues 73–97; that stretch reads RWNLFIFVLTYTVAWLFMASMWWVI. Residues 98-121 lie on the Extracellular side of the membrane; it reads AYMRGDLNKAHDDSYTPCVANVYN. The segment at residues 122–133 is an intramembrane region (helical; Pore-forming); sequence FPSAFLFFIETE. An intramembrane region (pore-forming) is located at residues 134 to 140; the sequence is ATIGYGY. Positions 135 to 140 match the Selectivity filter motif; the sequence is TIGYGY. The Extracellular segment spans residues 141–149; that stretch reads RYITDKCPE. Residues 150–171 form a helical membrane-spanning segment; sequence GIILFLFQSILGSIVDAFLIGC. At 172-492 the chain is on the cytoplasmic side; that stretch reads MFIKMSQPKK…LRKMNSDRFT (321 aa). The tract at residues 174–201 is polyphosphoinositide (PIP2)-binding; that stretch reads IKMSQPKKRAETLMFSEHAAISMRDGKL. The tract at residues 452–492 is disordered; it reads SDPMSQSVADLPPKLQKLSGGGRMEGNLPPKLRKMNSDRFT.

It belongs to the inward rectifier-type potassium channel (TC 1.A.2.1) family. KCNJ3 subfamily. Associates with KCNJ5/GIRK4 or KCNJ6/GIRK2 or KCNJ9/GIRK3 to form a G-protein activated heteromultimer pore-forming unit. The resulting inward current is much larger.

It localises to the membrane. It carries out the reaction K(+)(in) = K(+)(out). With respect to regulation, heteromultimer composed of KCNJ3/GIRK1 and KCNJ5/GIRK4 is activated by phosphatidylinositol 4,5 biphosphate (PtdIns(4,5)P2). Functionally, inward rectifier potassium channels are characterized by a greater tendency to allow potassium to flow into the cell rather than out of it. Their voltage dependence is regulated by the concentration of extracellular potassium; as external potassium is raised, the voltage range of the channel opening shifts to more positive voltages. The inward rectification is mainly due to the blockage of outward current by internal magnesium. This potassium channel is controlled by G proteins. This receptor plays a crucial role in regulating the heartbeat. This chain is G protein-activated inward rectifier potassium channel 1 (KCNJ3), found in Gallus gallus (Chicken).